The following is a 221-amino-acid chain: Protein-disulfide oxidoreductase DsbI (221 aa).

Residues 27-47 form a helical membrane-spanning segment; it reads FLWLLMAVAMGGLIILAHSFF. Cysteines 56 and 59 form a disulfide. 2 helical membrane passes run 64-84 and 85-105; these read FAMFVMVFGGLIAAINPKNII and LKLIGCLAAFYGSIMGIKFSV. A disulfide bridge links C128 with C154. The helical transmembrane segment at 189–209 threads the bilayer; the sequence is LAFYEYGAGVPAGVWAMFCTV.

This sequence belongs to the DsbB family. DsbI subfamily. Interacts with DsbL.

It is found in the cell inner membrane. Required for disulfide bond formation in some proteins. Part of a redox system composed of DsbI and DsbL that mediates formation of an essential disulfide bond in AssT. The protein is Protein-disulfide oxidoreductase DsbI of Lelliottia amnigena (Enterobacter amnigenus).